A 172-amino-acid polypeptide reads, in one-letter code: Shikimate kinase (172 aa).

14-19 (GAGKST) is a binding site for ATP. Residue serine 18 participates in Mg(2+) binding. Positions 36, 60, and 82 each coordinate substrate. Arginine 120 provides a ligand contact to ATP. Position 139 (arginine 139) interacts with substrate. Glutamine 156 provides a ligand contact to ATP.

This sequence belongs to the shikimate kinase family. As to quaternary structure, monomer. It depends on Mg(2+) as a cofactor.

The protein resides in the cytoplasm. It carries out the reaction shikimate + ATP = 3-phosphoshikimate + ADP + H(+). The protein operates within metabolic intermediate biosynthesis; chorismate biosynthesis; chorismate from D-erythrose 4-phosphate and phosphoenolpyruvate: step 5/7. Functionally, catalyzes the specific phosphorylation of the 3-hydroxyl group of shikimic acid using ATP as a cosubstrate. In Aliivibrio salmonicida (strain LFI1238) (Vibrio salmonicida (strain LFI1238)), this protein is Shikimate kinase.